A 569-amino-acid chain; its full sequence is Urease subunit alpha (569 aa).

A Urease domain is found at Gly-131–Phe-569. His-136, His-138, and Lys-218 together coordinate Ni(2+). Lys-218 is subject to N6-carboxylysine. His-220 provides a ligand contact to substrate. Positions 247 and 273 each coordinate Ni(2+). The active-site Proton donor is His-321. Asp-361 serves as a coordination point for Ni(2+).

This sequence belongs to the metallo-dependent hydrolases superfamily. Urease alpha subunit family. In terms of assembly, heterotrimer of UreA (gamma), UreB (beta) and UreC (alpha) subunits. Three heterotrimers associate to form the active enzyme. Ni cation is required as a cofactor. Carboxylation allows a single lysine to coordinate two nickel ions.

Its subcellular location is the cytoplasm. It carries out the reaction urea + 2 H2O + H(+) = hydrogencarbonate + 2 NH4(+). The protein operates within nitrogen metabolism; urea degradation; CO(2) and NH(3) from urea (urease route): step 1/1. This Rhizobium rhizogenes (strain K84 / ATCC BAA-868) (Agrobacterium radiobacter) protein is Urease subunit alpha.